A 358-amino-acid chain; its full sequence is Ribosomal RNA large subunit methyltransferase M (358 aa).

Residues Ser183, 216–219, Asp235, Asp255, and Asp271 each bind S-adenosyl-L-methionine; that span reads APGG. Residue Lys300 is the Proton acceptor of the active site.

It belongs to the class I-like SAM-binding methyltransferase superfamily. RNA methyltransferase RlmE family. RlmM subfamily. Monomer.

The protein resides in the cytoplasm. It catalyses the reaction cytidine(2498) in 23S rRNA + S-adenosyl-L-methionine = 2'-O-methylcytidine(2498) in 23S rRNA + S-adenosyl-L-homocysteine + H(+). Functionally, catalyzes the 2'-O-methylation at nucleotide C2498 in 23S rRNA. The sequence is that of Ribosomal RNA large subunit methyltransferase M from Pseudomonas fluorescens (strain SBW25).